The following is a 485-amino-acid chain: Transcription factor E2FA (485 aa).

Low complexity predominate over residues 1–11 (MSGVVRSSPGS). Disordered stretches follow at residues 1 to 69 (MSGV…SNNN) and 114 to 159 (SGFT…SPIT). Residues 12–26 (SQPPPPPPHHPPSSP) are compositionally biased toward pro residues. Polar residues predominate over residues 114 to 125 (SGFTNIPSSPCQ). Positions 129-141 (KGGRVNIKSKAKG) are enriched in basic residues. Over residues 142 to 159 (NKSTPQTPISTNAGSPIT) the composition is skewed to polar residues. A DNA-binding region spans residues 167 to 232 (RYDSSLGLLT…PFKNRILWKG (66 aa)). Positions 245-286 (SVLQLQAEIENLALEEQALDNQIRQTEERLRDLSENEKNQKW) form a coiled coil. The tract at residues 249–277 (LQAEIENLALEEQALDNQIRQTEERLRDL) is leucine-zipper. Residues 435–450 (DYWLLSNAEISMTDIW) are retinoblastoma protein binding.

It belongs to the E2F/DP family. As to quaternary structure, heterodimer with DP proteins. Interacts (via dimerization domain) preferentially with DPA, but also with DPB. Interacts with maize retinoblastoma-related protein RBR1. No interaction with E2FD. Highly expressed in the shoot apical meristem, emerging leaf primordia, and vascular tissues of young leaf primordia. Expressed in flowers, in epidermis and cortex of hypocotyls, and at lower levels in leaves.

The protein localises to the cytoplasm. It is found in the nucleus. In terms of biological role, transcription activator that binds DNA cooperatively with DP proteins through the E2 recognition site, 5'-TTTC[CG]CGC-3' found in the promoter region of a number of genes whose products are involved in cell cycle regulation or in DNA replication. The binding of retinoblastoma-related proteins represses transactivation. Regulates gene expression both positively and negatively. Activates the expression of E2FB. Involved in the control of cell-cycle progression from G1 to S phase. Stimulates cell proliferation and delays differentiation. The sequence is that of Transcription factor E2FA (E2FA) from Arabidopsis thaliana (Mouse-ear cress).